Here is a 625-residue protein sequence, read N- to C-terminus: Baeyer-Villiger monooxygenase ATR8 (625 aa).

FAD is bound by residues D112, 120–123 (TWYW), D132, and Y138. An NADP(+)-binding site is contributed by 130–132 (QCD). Residues 266 to 272 (TGATAIQ), 289 to 290 (RT), and 405 to 406 (KR) contribute to the NADP(+) site.

The protein belongs to the FAD-binding monooxygenase family. Requires FAD as cofactor.

The protein operates within mycotoxin biosynthesis. In terms of biological role, baeyer-Villiger monooxygenase; part of the core atranone cluster (CAC) which products are predicted to catalyze most or all steps of mycotoxin atranone synthesis, starting from geranylgeranyl pyrophosphate (GGPP). The initial cyclization of GGPP to dolabellane is probably performed by the terpene cyclase ATR13. The Baeyer-Villiger oxidation near the end of the atranone synthesis, which converts atranones D and E to atranones F and G is predicted to be catalyzed by the monooxygenase ATR8. Of the CAC's other predicted gene products, the reducing PKS ATR6 might synthesize a polyketide chain. This polyketide is probably transferred onto the atranone backbone by the polyketide transferase ATR5. Other predicted CAC products include 4 oxygenases (ATR2, ATR3, ATR4, and ATR14), 3 short-chain reductases (ATR7, ATR9, and ATR10), and a methyltransferase (ATR12). These may all be involved in the various steps of atranone biosynthesis, although their specific roles must await experimental determination. In Stachybotrys chlorohalonatus (strain IBT 40285), this protein is Baeyer-Villiger monooxygenase ATR8.